The following is a 92-amino-acid chain: MKMVYLGLFLIITSCVISSGNLIYECKWADSIRLKDKNPTHEFCKKKCEEKNTDRITVQHGFHSSDYRCTCQGEKILETPYQSDGVKDCHRI.

A signal peptide spans 1-20; that stretch reads MKMVYLGLFLIITSCVISSG.

Post-translationally, contains 3 disulfide bonds. Expressed by the venom gland.

It is found in the secreted. Its function is as follows. Inhibits voltage-gated potassium channels (Kv) (IC(50)=about 10 nM), when tested on DRG neurons. This is Kappa-scoloptoxin(15)-Ssd2a from Scolopendra dehaani (Thai centipede).